A 216-amino-acid chain; its full sequence is Small ribosomal subunit protein uS3c (216 aa).

In terms of domain architecture, KH type-2 spans 43 to 118 (IKNYIQKNIR…KLNIAIVKIT (76 aa)).

Belongs to the universal ribosomal protein uS3 family. In terms of assembly, part of the 30S ribosomal subunit.

It localises to the plastid. The protein localises to the chloroplast. The sequence is that of Small ribosomal subunit protein uS3c (rps3) from Phaseolus vulgaris (Kidney bean).